A 230-amino-acid polypeptide reads, in one-letter code: Biosynthetic peptidoglycan transglycosylase (230 aa).

A helical transmembrane segment spans residues 11–31 (VLLVLVALFVLYQLWIFTLVL).

Belongs to the glycosyltransferase 51 family.

It is found in the cell inner membrane. The catalysed reaction is [GlcNAc-(1-&gt;4)-Mur2Ac(oyl-L-Ala-gamma-D-Glu-L-Lys-D-Ala-D-Ala)](n)-di-trans,octa-cis-undecaprenyl diphosphate + beta-D-GlcNAc-(1-&gt;4)-Mur2Ac(oyl-L-Ala-gamma-D-Glu-L-Lys-D-Ala-D-Ala)-di-trans,octa-cis-undecaprenyl diphosphate = [GlcNAc-(1-&gt;4)-Mur2Ac(oyl-L-Ala-gamma-D-Glu-L-Lys-D-Ala-D-Ala)](n+1)-di-trans,octa-cis-undecaprenyl diphosphate + di-trans,octa-cis-undecaprenyl diphosphate + H(+). The protein operates within cell wall biogenesis; peptidoglycan biosynthesis. In terms of biological role, peptidoglycan polymerase that catalyzes glycan chain elongation from lipid-linked precursors. This chain is Biosynthetic peptidoglycan transglycosylase, found in Aromatoleum aromaticum (strain DSM 19018 / LMG 30748 / EbN1) (Azoarcus sp. (strain EbN1)).